Consider the following 807-residue polypeptide: Poly-beta-1,6-N-acetyl-D-glucosamine export protein (807 aa).

Positions 1–26 (MYSSSRKRCPKTKWALKLLTAAFLAA) are cleaved as a signal peptide. 3 TPR repeats span residues 98 to 131 (ARGY…EPQN), 165 to 198 (KANL…NAST), and 279 to 311 (RIQV…GQII).

Its subcellular location is the cell outer membrane. In terms of biological role, exports the biofilm adhesin polysaccharide poly-beta-1,6-N-acetyl-D-glucosamine (PGA) across the outer membrane. The PGA transported seems to be partially N-deacetylated since N-deacetylation of PGA by PgaB is needed for PGA export through the PgaA porin. This Escherichia coli O157:H7 protein is Poly-beta-1,6-N-acetyl-D-glucosamine export protein (pgaA).